Here is a 396-residue protein sequence, read N- to C-terminus: Interleukin-3 receptor subunit alpha (396 aa).

The signal sequence occupies residues 1–16 (MAANLWLILGLLASHS). Residues 17–331 (SDLAAVREAP…VCPPEVMPVK (315 aa)) are Extracellular-facing. 5 disulfide bridges follow: Cys-62-Cys-79, Cys-87-Cys-223, Cys-125-Cys-134, Cys-165-Cys-187, and Cys-245-Cys-323. Asn-91 is a glycosylation site (N-linked (GlcNAc...) asparagine). Residues Asn-213, Asn-246, Asn-272, and Asn-283 are each glycosylated (N-linked (GlcNAc...) asparagine). A WSXWS motif motif is present at residues 312-316 (LSSWS). A helical membrane pass occupies residues 332–355 (TALVTSVATVLGAGLVAAGLLLWW). The Cytoplasmic segment spans residues 356 to 396 (RKSLLYRLCPPIPRLRLPLAGEMVVWEPALEDCEVTPVTDA). A Glycyl lysine isopeptide (Lys-Gly) (interchain with G-Cter in ubiquitin) cross-link involves residue Lys-357. The short motif at 363–371 (LCPPIPRLR) is the Box 1 motif element.

This sequence belongs to the type I cytokine receptor family. Type 5 subfamily. Interacts with IL3. Heterodimer of an alpha and a beta subunit. The beta subunit is common to the IL3, IL5 and GM-CSF receptors. In terms of processing, ubiquitinated at Lys-357 by RNFT2 in response to IL3. Ubiquitination leads ligand-induced degradation by the proteasome. Ubiquitinated by RNF128 via 'Lys-27'-linked polyubiquitination, facilitating its degradation through the lysosomal pathway.

It is found in the cell membrane. Its subcellular location is the endomembrane system. Its function is as follows. Cell surface receptor for IL3 expressed on hematopoietic progenitor cells, monocytes and B-lymphocytes that controls the production and differentiation of hematopoietic progenitor cells into lineage-restricted cells. Ligand stimulation rapidly induces hetrodimerization with IL3RB, phosphorylation and enzyme activity of effector proteins such as JAK2 and PI3K that play a role in signaling cell proliferation and differentiation. Activation of JAK2 leads to STAT5-mediated transcriptional program. This chain is Interleukin-3 receptor subunit alpha (Il3ra), found in Mus musculus (Mouse).